We begin with the raw amino-acid sequence, 291 residues long: MEGMDVDLDAELMQKFSCLGTTDKDVLIGEFQRLLGFQLSPAGCAFFLDMTNWNLQAAIGAYYDFESPNINVPSMSFVEDVTIGEGESIPPDTQFTKTWRIQNTGTEVWPPGVCLKYVGGDQFGHVNMVMVRSLEPQEIADVSVQMCSPSTAGMYQGQWRMCTATGLYYGDVIWVILSVEVGGLLGVTQQLSSFETEFNTQPHRKVEGNFNPFASPQKNRQPDENNLKDPGGSELGTISKNTWGPAPDQIEQDQNGLSQNSVNLSPSSHSNNLSVVTYSKGFHGPYPFGQS.

The segment at 199-275 (NTQPHRKVEG…PSSHSNNLSV (77 aa)) is disordered. Positions 257–275 (LSQNSVNLSPSSHSNNLSV) are enriched in low complexity.

It is found in the cytoplasm. The protein localises to the nucleus. May have a roles as negative regulator of innate antiviral response. The chain is Protein ILRUN (ILRUN) from Gallus gallus (Chicken).